The chain runs to 545 residues: Probable protein kinase UbiB (545 aa).

The Protein kinase domain occupies 123 to 501 (DFEPIALASA…QIKQRQSQYL (379 aa)). Residues 129–137 (LASASIAQV) and Lys-152 contribute to the ATP site. Asp-287 functions as the Proton acceptor in the catalytic mechanism. A helical transmembrane segment spans residues 508–528 (LFLCGSLFLLSGLANIPWLFI).

The protein belongs to the ABC1 family. UbiB subfamily.

Its subcellular location is the cell inner membrane. It participates in cofactor biosynthesis; ubiquinone biosynthesis [regulation]. Its function is as follows. Is probably a protein kinase regulator of UbiI activity which is involved in aerobic coenzyme Q (ubiquinone) biosynthesis. The sequence is that of Probable protein kinase UbiB from Photorhabdus laumondii subsp. laumondii (strain DSM 15139 / CIP 105565 / TT01) (Photorhabdus luminescens subsp. laumondii).